The sequence spans 183 residues: Ribosome-recycling factor (183 aa).

Belongs to the RRF family.

It localises to the cytoplasm. Responsible for the release of ribosomes from messenger RNA at the termination of protein biosynthesis. May increase the efficiency of translation by recycling ribosomes from one round of translation to another. This Ureaplasma parvum serovar 3 (strain ATCC 27815 / 27 / NCTC 11736) protein is Ribosome-recycling factor.